The primary structure comprises 434 residues: Nicotinate phosphoribosyltransferase (434 aa).

His-242 carries the phosphohistidine; by autocatalysis modification.

It belongs to the NAPRTase family. Post-translationally, transiently phosphorylated on a His residue during the reaction cycle. Phosphorylation strongly increases the affinity for substrates and increases the rate of nicotinate D-ribonucleotide production. Dephosphorylation regenerates the low-affinity form of the enzyme, leading to product release.

The catalysed reaction is nicotinate + 5-phospho-alpha-D-ribose 1-diphosphate + ATP + H2O = nicotinate beta-D-ribonucleotide + ADP + phosphate + diphosphate. The protein operates within cofactor biosynthesis; NAD(+) biosynthesis; nicotinate D-ribonucleotide from nicotinate: step 1/1. Its function is as follows. Catalyzes the synthesis of beta-nicotinate D-ribonucleotide from nicotinate and 5-phospho-D-ribose 1-phosphate at the expense of ATP. This Rhizobium rhizogenes (strain K84 / ATCC BAA-868) (Agrobacterium radiobacter) protein is Nicotinate phosphoribosyltransferase.